The primary structure comprises 660 residues: DNA mismatch repair protein MutL (660 aa).

The disordered stretch occupies residues 414 to 433 (SSVKHASRPQNTFTETDHPN).

It belongs to the DNA mismatch repair MutL/HexB family.

Its function is as follows. This protein is involved in the repair of mismatches in DNA. It is required for dam-dependent methyl-directed DNA mismatch repair. May act as a 'molecular matchmaker', a protein that promotes the formation of a stable complex between two or more DNA-binding proteins in an ATP-dependent manner without itself being part of a final effector complex. The protein is DNA mismatch repair protein MutL of Streptococcus pyogenes serotype M6 (strain ATCC BAA-946 / MGAS10394).